The chain runs to 487 residues: N-succinylglutamate 5-semialdehyde dehydrogenase (487 aa).

221-226 contributes to the NAD(+) binding site; that stretch reads GSSDTG. Residues Glu244 and Cys278 contribute to the active site.

Belongs to the aldehyde dehydrogenase family. AstD subfamily.

The enzyme catalyses N-succinyl-L-glutamate 5-semialdehyde + NAD(+) + H2O = N-succinyl-L-glutamate + NADH + 2 H(+). Its pathway is amino-acid degradation; L-arginine degradation via AST pathway; L-glutamate and succinate from L-arginine: step 4/5. Catalyzes the NAD-dependent reduction of succinylglutamate semialdehyde into succinylglutamate. The polypeptide is N-succinylglutamate 5-semialdehyde dehydrogenase (Burkholderia ambifaria (strain MC40-6)).